Here is a 316-residue protein sequence, read N- to C-terminus: tRNA dimethylallyltransferase (316 aa).

17–24 (GPTASGKT) serves as a coordination point for ATP. Position 19–24 (19–24 (TASGKT)) interacts with substrate. Interaction with substrate tRNA regions lie at residues 42-45 (DSAL), 166-170 (QRLSR), 247-252 (RCVGYR), and 280-287 (KRQITWLR).

It belongs to the IPP transferase family. Monomer. Mg(2+) serves as cofactor.

It catalyses the reaction adenosine(37) in tRNA + dimethylallyl diphosphate = N(6)-dimethylallyladenosine(37) in tRNA + diphosphate. Functionally, catalyzes the transfer of a dimethylallyl group onto the adenine at position 37 in tRNAs that read codons beginning with uridine, leading to the formation of N6-(dimethylallyl)adenosine (i(6)A). The sequence is that of tRNA dimethylallyltransferase from Cronobacter sakazakii (strain ATCC BAA-894) (Enterobacter sakazakii).